The following is a 358-amino-acid chain: Phenylalanine--tRNA ligase alpha subunit (358 aa).

E258 is a Mg(2+) binding site.

This sequence belongs to the class-II aminoacyl-tRNA synthetase family. Phe-tRNA synthetase alpha subunit type 1 subfamily. As to quaternary structure, tetramer of two alpha and two beta subunits. It depends on Mg(2+) as a cofactor.

Its subcellular location is the cytoplasm. The catalysed reaction is tRNA(Phe) + L-phenylalanine + ATP = L-phenylalanyl-tRNA(Phe) + AMP + diphosphate + H(+). The protein is Phenylalanine--tRNA ligase alpha subunit of Rhodospirillum rubrum (strain ATCC 11170 / ATH 1.1.1 / DSM 467 / LMG 4362 / NCIMB 8255 / S1).